We begin with the raw amino-acid sequence, 187 residues long: Elongation factor P (187 aa).

It belongs to the elongation factor P family.

It is found in the cytoplasm. Its pathway is protein biosynthesis; polypeptide chain elongation. In terms of biological role, involved in peptide bond synthesis. Stimulates efficient translation and peptide-bond synthesis on native or reconstituted 70S ribosomes in vitro. Probably functions indirectly by altering the affinity of the ribosome for aminoacyl-tRNA, thus increasing their reactivity as acceptors for peptidyl transferase. The protein is Elongation factor P of Helicobacter acinonychis (strain Sheeba).